The chain runs to 277 residues: Bis(5'-nucleosyl)-tetraphosphatase, symmetrical (277 aa).

This sequence belongs to the Ap4A hydrolase family.

The enzyme catalyses P(1),P(4)-bis(5'-adenosyl) tetraphosphate + H2O = 2 ADP + 2 H(+). Its function is as follows. Hydrolyzes diadenosine 5',5'''-P1,P4-tetraphosphate to yield ADP. The chain is Bis(5'-nucleosyl)-tetraphosphatase, symmetrical from Methylobacillus flagellatus (strain ATCC 51484 / DSM 6875 / VKM B-1610 / KT).